We begin with the raw amino-acid sequence, 393 residues long: Aspartate aminotransferase (393 aa).

Residues Gly-38, Trp-124, and Asn-174 each contribute to the L-aspartate site. At Lys-237 the chain carries N6-(pyridoxal phosphate)lysine.

Belongs to the class-I pyridoxal-phosphate-dependent aminotransferase family. As to quaternary structure, homodimer. It depends on pyridoxal 5'-phosphate as a cofactor.

It is found in the cytoplasm. The enzyme catalyses L-aspartate + 2-oxoglutarate = oxaloacetate + L-glutamate. In Bacillus subtilis (strain 168), this protein is Aspartate aminotransferase (aspB).